Here is a 305-residue protein sequence, read N- to C-terminus: Oxygen-dependent coproporphyrinogen-III oxidase (305 aa).

S99 contacts substrate. H103 and H113 together coordinate a divalent metal cation. Residue H113 is the Proton donor of the active site. Position 115-117 (115-117) interacts with substrate; it reads NVR. The a divalent metal cation site is built by H152 and H182. An important for dimerization region spans residues 247–282; it reads YVEFNLVLDRGTLFGLQTGGRTESILMSMPPLARWE. 265 to 267 contacts substrate; sequence GGR.

Belongs to the aerobic coproporphyrinogen-III oxidase family. Homodimer. A divalent metal cation is required as a cofactor.

It localises to the cytoplasm. The enzyme catalyses coproporphyrinogen III + O2 + 2 H(+) = protoporphyrinogen IX + 2 CO2 + 2 H2O. It participates in porphyrin-containing compound metabolism; protoporphyrin-IX biosynthesis; protoporphyrinogen-IX from coproporphyrinogen-III (O2 route): step 1/1. Its function is as follows. Involved in the heme biosynthesis. Catalyzes the aerobic oxidative decarboxylation of propionate groups of rings A and B of coproporphyrinogen-III to yield the vinyl groups in protoporphyrinogen-IX. The polypeptide is Oxygen-dependent coproporphyrinogen-III oxidase (Vibrio cholerae serotype O1 (strain M66-2)).